Consider the following 72-residue polypeptide: MVAIFNFQSLLVVILLFICTCTYIRGSYPSLLEVRDKHSFSGLPRKAAIIGERLSPWVSACCLIMGLWTLYN.

A signal peptide spans 1 to 26; it reads MVAIFNFQSLLVVILLFICTCTYIRG. Over 27–47 the chain is Extracellular; the sequence is SYPSLLEVRDKHSFSGLPRKA. The chain crosses the membrane as a helical span at residues 48 to 68; that stretch reads AIIGERLSPWVSACCLIMGLW. The Cytoplasmic segment spans residues 69–72; it reads TLYN.

Belongs to the KISH family.

The protein localises to the golgi apparatus membrane. Functionally, involved in the early part of the secretory pathway. This is Protein kish (tmem167) from Dictyostelium discoideum (Social amoeba).